We begin with the raw amino-acid sequence, 465 residues long: Argininosuccinate lyase (465 aa).

Belongs to the lyase 1 family. Argininosuccinate lyase subfamily.

It is found in the cytoplasm. It catalyses the reaction 2-(N(omega)-L-arginino)succinate = fumarate + L-arginine. It participates in amino-acid biosynthesis; L-arginine biosynthesis; L-arginine from L-ornithine and carbamoyl phosphate: step 3/3. This Deinococcus deserti (strain DSM 17065 / CIP 109153 / LMG 22923 / VCD115) protein is Argininosuccinate lyase.